A 208-amino-acid chain; its full sequence is Thymidylate kinase (208 aa).

10-17 contacts ATP; the sequence is GLEGAGKS.

It belongs to the thymidylate kinase family.

It catalyses the reaction dTMP + ATP = dTDP + ADP. Functionally, phosphorylation of dTMP to form dTDP in both de novo and salvage pathways of dTTP synthesis. This is Thymidylate kinase from Glaesserella parasuis serovar 5 (strain SH0165) (Haemophilus parasuis).